The following is a 390-amino-acid chain: MRKLWNALRRPSARWSVLALVAIGIVIGIALIVLPHVGIKVTSTTEFCVSCHSMQPVYEEYKQSVHFQNASGVRAECHDCHIPPDIPGMVKRKLEASNDIYQTFIAHSIDTPEKFEAKRAELAEREWARMKENNSATCRSCHNYDAMDHAKQHPEAARQMKVAAKDNQSCIDCHKGIAHQLPDMSSGFRKQFDELRASANDSGDTLYSIDIKPIYAAKGDKEASGSLLPASEVKVLKRDGDWLQIEITGWTESAGRQRVLTQFPGKRIFVASIRGDVQQQVKTLEKTTVADTNTEWSKLQATAWMKKGDMVNDIKPIWAYADSLYNGTCNQCHGAPEIAHFDANGWIGTLNGMIGFTSLDKREERTLLKYLQMNASDTAGKAHGDKKEEK.

Residues 1–16 (MRKLWNALRRPSARWS) are Cytoplasmic-facing. The helical transmembrane segment at 17–37 (VLALVAIGIVIGIALIVLPHV) threads the bilayer. Topologically, residues 38-390 (GIKVTSTTEF…KAHGDKKEEK (353 aa)) are periplasmic. Positions 48, 51, 52, 77, 80, 81, 138, 141, 142, 170, 173, 174, 329, 332, and 333 each coordinate heme.

This sequence belongs to the TorC/TorY family. As to quaternary structure, the N-terminal domain interacts with TorA. The immature C-terminal domain can bind to the N-terminal detector region of TorS. In terms of processing, binds 5 heme groups per subunit.

The protein resides in the cell inner membrane. Part of the anaerobic respiratory chain of trimethylamine-N-oxide reductase TorA. Acts by transferring electrons from the membranous menaquinones to TorA. This transfer probably involves an electron transfer pathway from menaquinones to the N-terminal domain of TorC, then from the N-terminus to the C-terminus, and finally to TorA. TorC apocytochrome negatively autoregulates the torCAD operon probably by inhibiting the TorS kinase activity. The polypeptide is Cytochrome c-type protein TorC (torC) (Escherichia coli (strain K12)).